Consider the following 93-residue polypeptide: Small ribosomal subunit protein uS15c (93 aa).

It belongs to the universal ribosomal protein uS15 family. As to quaternary structure, part of the 30S ribosomal subunit.

Its subcellular location is the plastid. It localises to the chloroplast. This Jasminum nudiflorum (Winter jasmine) protein is Small ribosomal subunit protein uS15c (rps15).